A 305-amino-acid chain; its full sequence is GMP synthase [glutamine-hydrolyzing] subunit B (305 aa).

The GMPS ATP-PPase domain occupies 2 to 184 (VNTERFIQQA…LGLPREIQHR (183 aa)). An ATP-binding site is contributed by 29–35 (SGGVDSS).

Heterodimer composed of a glutamine amidotransferase subunit (A) and a GMP-binding subunit (B).

It catalyses the reaction XMP + L-glutamine + ATP + H2O = GMP + L-glutamate + AMP + diphosphate + 2 H(+). The protein operates within purine metabolism; GMP biosynthesis; GMP from XMP (L-Gln route): step 1/1. Catalyzes the synthesis of GMP from XMP. This Methanosphaerula palustris (strain ATCC BAA-1556 / DSM 19958 / E1-9c) protein is GMP synthase [glutamine-hydrolyzing] subunit B.